We begin with the raw amino-acid sequence, 43 residues long: Protein PsbN (43 aa).

Residues 5 to 27 form a helical membrane-spanning segment; the sequence is TLVAIFISGSLVSFTGYALYTAF.

Belongs to the PsbN family.

Its subcellular location is the plastid. It localises to the chloroplast thylakoid membrane. In terms of biological role, may play a role in photosystem I and II biogenesis. The protein is Protein PsbN of Nelumbo lutea (American lotus).